Consider the following 663-residue polypeptide: MRGCLQVLRWLSTSTARRPVSSRPLHEIFPKSEFRRPFTSTILRQAQASRNVSDLEKRIADIPIERFRNFCIVAHVDHGKSTLSDRLLELTGVIQPGSNKQVLDKLDVERERGITVKAQTCTMLYNHNGEDYLLHLIDTPGHVDFRAEVSRSYASCGGALLLVDASQGVQAQTVANFYLAFAQGLELVPVLNKVDLPSADPERALEQMRSSFELDTDNAIKVSAKTGLNVAQLLPTVIERIPAPVGDHTKPLRMLLVDSWYSTYKGVILLVRVFDGEIRAGDQVVSFATGLKYFVGEVGIMYPDQTPQTTLRAGQVGYIYFNPGMKRSKEAKIGDTFTKVGFEKKVEPLPGFEEPKSMVFVAAYPSDADHFEHLEDSVNQLVLNDRSITVQKESSEALGAGFRLGFLGTLHCSVFEDRLRHEHGASILITPPTVPVKVIYKDGKEVTITNPAHFPDEDDIRAKVAELREPYVMATLTFPDEYLGKVIELCEANRGIQHTLEYFTPTQVILKYELPLGQLVEDFFGKLKGSTKGYATLDYEEAGWKVSNIVKLQLLVNKKSVDAVARIVHYSQAERLGKQWVTKFKEHVDRQMFEIIIQAAVGRKIVARETIKPYRKDVLAKLHAADIGRKRKLLEKQKEGRKRLNAVGNVVIDHSAFQAFLSK.

A mitochondrion-targeting transit peptide spans 1–51 (MRGCLQVLRWLSTSTARRPVSSRPLHEIFPKSEFRRPFTSTILRQAQASRN). In terms of domain architecture, tr-type G spans 65–245 (ERFRNFCIVA…TVIERIPAPV (181 aa)). GTP contacts are provided by residues 74–81 (AHVDHGKS), 138–142 (DTPGH), and 192–195 (NKVD).

The protein belongs to the TRAFAC class translation factor GTPase superfamily. Classic translation factor GTPase family. LepA subfamily.

The protein resides in the mitochondrion inner membrane. It carries out the reaction GTP + H2O = GDP + phosphate + H(+). Promotes mitochondrial protein synthesis. May act as a fidelity factor of the translation reaction, by catalyzing a one-codon backward translocation of tRNAs on improperly translocated ribosomes. Binds to mitochondrial ribosomes in a GTP-dependent manner. The protein is Translation factor guf1, mitochondrial (guf1) of Talaromyces marneffei (strain ATCC 18224 / CBS 334.59 / QM 7333) (Penicillium marneffei).